Consider the following 463-residue polypeptide: Metalloprotease slr0863 (463 aa).

The protein belongs to the peptidase U62 family.

Functionally, probable metalloprotease. This Synechocystis sp. (strain ATCC 27184 / PCC 6803 / Kazusa) protein is Metalloprotease slr0863.